The chain runs to 289 residues: Oxaloacetate decarboxylase (289 aa).

S47 is a binding site for substrate. D85 contributes to the Mg(2+) binding site. The substrate site is built by R156 and H232.

It belongs to the isocitrate lyase/PEP mutase superfamily. Oxaloacetate decarboxylase family. As to quaternary structure, homotetramer; dimer of dimers. The cofactor is Mg(2+).

It carries out the reaction oxaloacetate + H(+) = pyruvate + CO2. Functionally, catalyzes the decarboxylation of oxaloacetate into pyruvate. Seems to play a role in maintaining cellular concentrations of bicarbonate and pyruvate. This chain is Oxaloacetate decarboxylase, found in Rhodopseudomonas palustris (strain BisA53).